Reading from the N-terminus, the 1317-residue chain is DNA-directed RNA polymerase subunit beta' (1317 aa).

The Zn(2+) site is built by Cys60, Cys62, Cys75, and Cys78. The Mg(2+) site is built by Asp535, Asp537, and Asp539. Residues Cys890, Cys967, Cys974, and Cys977 each coordinate Zn(2+).

It belongs to the RNA polymerase beta' chain family. The RNAP catalytic core consists of 2 alpha, 1 beta, 1 beta' and 1 omega subunit. When a sigma factor is associated with the core the holoenzyme is formed, which can initiate transcription. Requires Mg(2+) as cofactor. It depends on Zn(2+) as a cofactor.

The catalysed reaction is RNA(n) + a ribonucleoside 5'-triphosphate = RNA(n+1) + diphosphate. DNA-dependent RNA polymerase catalyzes the transcription of DNA into RNA using the four ribonucleoside triphosphates as substrates. This chain is DNA-directed RNA polymerase subunit beta', found in Nocardia farcinica (strain IFM 10152).